A 355-amino-acid polypeptide reads, in one-letter code: Beta-porphyranase C (355 aa).

The signal sequence occupies residues 1–18 (MIKTLKRIPLVFLIAIMA). Cysteine 19 carries N-palmitoyl cysteine lipidation. Cysteine 19 is lipidated: S-diacylglycerol cysteine. A disordered region spans residues 22–72 (SGDNGKDKVEEQEQAQEQGEKKGQGEERDKEDGIDGLQPTFLADQDPKPDD). Over residues 39–54 (QGEKKGQGEERDKEDG) the composition is skewed to basic and acidic residues. Residues 71-355 (DDKKWIKVEG…WVRVWQLEDL (285 aa)) enclose the GH16 domain. Positions 110, 208, and 213 each coordinate substrate. Catalysis depends on glutamate 208, which acts as the Nucleophile. Glutamate 213 acts as the Proton donor in catalysis.

This sequence belongs to the glycosyl hydrolase 16 family.

It is found in the cell outer membrane. The enzyme catalyses Hydrolysis of beta-D-galactopyranose-(1-&gt;4)-alpha-L-galactopyranose-6-sulfate linkages in porphyran.. Functionally, cleaves the sulfated polysaccharide porphyran at the (1-&gt;4) linkages between beta-D-galactopyranose and alpha-L-galactopyranose-6-sulfate, forming mostly the disaccharide alpha-L-galactopyranose-6-sulfate-(1-&gt;3)-beta-D-galactose. The protein is Beta-porphyranase C (porC) of Zobellia galactanivorans (strain DSM 12802 / CCUG 47099 / CIP 106680 / NCIMB 13871 / Dsij).